The following is a 322-amino-acid chain: Anthranilate phosphoribosyltransferase (322 aa).

Residues G71, 74-75 (GD), T79, 81-84 (NVST), 99-107 (KFGNRSASG), and A111 contribute to the 5-phospho-alpha-D-ribose 1-diphosphate site. Residue G71 coordinates anthranilate. S83 provides a ligand contact to Mg(2+). N102 contributes to the anthranilate binding site. R157 is a binding site for anthranilate. Residues D215 and E216 each contribute to the Mg(2+) site.

It belongs to the anthranilate phosphoribosyltransferase family. In terms of assembly, homodimer. It depends on Mg(2+) as a cofactor.

The enzyme catalyses N-(5-phospho-beta-D-ribosyl)anthranilate + diphosphate = 5-phospho-alpha-D-ribose 1-diphosphate + anthranilate. It participates in amino-acid biosynthesis; L-tryptophan biosynthesis; L-tryptophan from chorismate: step 2/5. Catalyzes the transfer of the phosphoribosyl group of 5-phosphorylribose-1-pyrophosphate (PRPP) to anthranilate to yield N-(5'-phosphoribosyl)-anthranilate (PRA). This is Anthranilate phosphoribosyltransferase from Thermoplasma acidophilum (strain ATCC 25905 / DSM 1728 / JCM 9062 / NBRC 15155 / AMRC-C165).